The primary structure comprises 84 residues: Small ribosomal subunit protein bS20 (84 aa).

This sequence belongs to the bacterial ribosomal protein bS20 family.

Binds directly to 16S ribosomal RNA. The chain is Small ribosomal subunit protein bS20 from Porphyromonas gingivalis (strain ATCC 33277 / DSM 20709 / CIP 103683 / JCM 12257 / NCTC 11834 / 2561).